A 228-amino-acid polypeptide reads, in one-letter code: Transcription termination/antitermination protein NusG (228 aa).

This sequence belongs to the NusG family.

Participates in transcription elongation, termination and antitermination. This chain is Transcription termination/antitermination protein NusG, found in Mycobacterium leprae (strain TN).